We begin with the raw amino-acid sequence, 247 residues long: tRNA pseudouridine synthase A 1 (247 aa).

D53 functions as the Nucleophile in the catalytic mechanism. Y111 contacts substrate.

The protein belongs to the tRNA pseudouridine synthase TruA family. In terms of assembly, homodimer.

It carries out the reaction uridine(38/39/40) in tRNA = pseudouridine(38/39/40) in tRNA. Its function is as follows. Formation of pseudouridine at positions 38, 39 and 40 in the anticodon stem and loop of transfer RNAs. The sequence is that of tRNA pseudouridine synthase A 1 from Bacillus cereus (strain ZK / E33L).